Reading from the N-terminus, the 62-residue chain is Large ribosomal subunit protein uL30 (62 aa).

The protein belongs to the universal ribosomal protein uL30 family. As to quaternary structure, part of the 50S ribosomal subunit.

This is Large ribosomal subunit protein uL30 from Hydrogenovibrio crunogenus (strain DSM 25203 / XCL-2) (Thiomicrospira crunogena).